A 109-amino-acid polypeptide reads, in one-letter code: T cell receptor alpha variable 25 (109 aa).

Positions 1-19 are cleaved as a signal peptide; the sequence is MLLITSMLVLWMQLSQVNG. Residues 20-109 enclose the Ig-like domain; sequence QQVMQIPQYQ…TDVGTYFCAG (90 aa). Cysteines 41 and 107 form a disulfide. 2 N-linked (GlcNAc...) asparagine glycosylation sites follow: Asn42 and Asn89.

Alpha-beta TR is a heterodimer composed of an alpha and beta chain; disulfide-linked. The alpha-beta TR is associated with the transmembrane signaling CD3 coreceptor proteins to form the TR-CD3 (TcR or TCR). The assembly of alpha-beta TR heterodimers with CD3 occurs in the endoplasmic reticulum where a single alpha-beta TR heterodimer associates with one CD3D-CD3E heterodimer, one CD3G-CD3E heterodimer and one CD247 homodimer forming a stable octameric structure. CD3D-CD3E and CD3G-CD3E heterodimers preferentially associate with TR alpha and TR beta chains, respectively. The association of the CD247 homodimer is the last step of TcR assembly in the endoplasmic reticulum and is required for transport to the cell surface.

The protein localises to the cell membrane. Its function is as follows. V region of the variable domain of T cell receptor (TR) alpha chain that participates in the antigen recognition. Alpha-beta T cell receptors are antigen specific receptors which are essential to the immune response and are present on the cell surface of T lymphocytes. Recognize peptide-major histocompatibility (MH) (pMH) complexes that are displayed by antigen presenting cells (APC), a prerequisite for efficient T cell adaptive immunity against pathogens. Binding of alpha-beta TR to pMH complex initiates TR-CD3 clustering on the cell surface and intracellular activation of LCK that phosphorylates the ITAM motifs of CD3G, CD3D, CD3E and CD247 enabling the recruitment of ZAP70. In turn ZAP70 phosphorylates LAT, which recruits numerous signaling molecules to form the LAT signalosome. The LAT signalosome propagates signal branching to three major signaling pathways, the calcium, the mitogen-activated protein kinase (MAPK) kinase and the nuclear factor NF-kappa-B (NF-kB) pathways, leading to the mobilization of transcription factors that are critical for gene expression and essential for T cell growth and differentiation. The T cell repertoire is generated in the thymus, by V-(D)-J rearrangement. This repertoire is then shaped by intrathymic selection events to generate a peripheral T cell pool of self-MH restricted, non-autoaggressive T cells. Post-thymic interaction of alpha-beta TR with the pMH complexes shapes TR structural and functional avidity. This is T cell receptor alpha variable 25 from Homo sapiens (Human).